The chain runs to 572 residues: O-fucosyltransferase 16 (572 aa).

A helical; Signal-anchor for type II membrane protein membrane pass occupies residues 17 to 37 (LLPLVIAVSLSLLILFAFLSF). 2 N-linked (GlcNAc...) asparagine glycosylation sites follow: Asn92 and Asn136. Residue 274–276 (HLR) participates in substrate binding. N-linked (GlcNAc...) asparagine glycans are attached at residues Asn446 and Asn506. Residues 498 to 572 (ESRKLGKKNK…EPELEAMLSD (75 aa)) form a disordered region. Positions 521-541 (DQTEEDDPDWSEPDYEEEQSD) are enriched in acidic residues. Asn549 carries N-linked (GlcNAc...) asparagine glycosylation. Acidic residues predominate over residues 554–566 (DYDDPSTSDEPEL).

It belongs to the glycosyltransferase GT106 family.

It localises to the membrane. It functions in the pathway glycan metabolism. The chain is O-fucosyltransferase 16 from Arabidopsis thaliana (Mouse-ear cress).